Here is a 718-residue protein sequence, read N- to C-terminus: Ribosomal RNA large subunit methyltransferase K/L (718 aa).

Residues 44 to 155 (DAYKVCIYSH…KQYVNVFLCL (112 aa)) form the THUMP domain.

Belongs to the methyltransferase superfamily. RlmKL family.

Its subcellular location is the cytoplasm. It catalyses the reaction guanosine(2445) in 23S rRNA + S-adenosyl-L-methionine = N(2)-methylguanosine(2445) in 23S rRNA + S-adenosyl-L-homocysteine + H(+). The catalysed reaction is guanosine(2069) in 23S rRNA + S-adenosyl-L-methionine = N(2)-methylguanosine(2069) in 23S rRNA + S-adenosyl-L-homocysteine + H(+). Its function is as follows. Specifically methylates the guanine in position 2445 (m2G2445) and the guanine in position 2069 (m7G2069) of 23S rRNA. This is Ribosomal RNA large subunit methyltransferase K/L from Francisella philomiragia subsp. philomiragia (strain ATCC 25017 / CCUG 19701 / FSC 153 / O#319-036).